We begin with the raw amino-acid sequence, 358 residues long: Histamine H2 receptor (358 aa).

The Extracellular segment spans residues 1-22 (MEPNGTVHSCCLDSMALKVTIS). A glycan (N-linked (GlcNAc...) asparagine) is linked at Asn-4. A helical membrane pass occupies residues 23–44 (VVLTTLILITIAGNVVVCLAVS). The Cytoplasmic segment spans residues 45–57 (LNRRLRSLTNCFI). A helical membrane pass occupies residues 58 to 81 (VSLAATDLLLGLLVLPFSAIYQLS). Over 82–92 (FTWSFGHVFCN) the chain is Extracellular. Cys-91 and Cys-173 are disulfide-bonded. Residues 93–114 (IYTSLDVMLCTASILNLFMISL) traverse the membrane as a helical segment. The Cytoplasmic portion of the chain corresponds to 115–134 (DRYCAVTDPLRYPVLVTPVR). The chain crosses the membrane as a helical span at residues 135-159 (VAISLVFIWVISITLSFLSIHLGWN). Over 160-179 (SRNGTRGGNDTFKCKVQVNE) the chain is Extracellular. The chain crosses the membrane as a helical span at residues 180–203 (VYGLVDGLVTFYLPLLIMCVTYYR). At 204–233 (IFKIAREQAKRINHISSWKAATIREHKATV) the chain is on the cytoplasmic side. The helical transmembrane segment at 234–257 (TLAAVMGAFIICWFPYFTAFVYRG) threads the bilayer. Over 258-266 (LRGDDAINE) the chain is Extracellular. A helical membrane pass occupies residues 267-288 (AVEGIVLWLGYANSALNPILYA). The Cytoplasmic portion of the chain corresponds to 289–358 (ALNRDFRTAY…LTHPQGNPIR (70 aa)). Cys-304 is lipidated: S-palmitoyl cysteine.

Belongs to the G-protein coupled receptor 1 family.

It localises to the cell membrane. Functionally, the H2 subclass of histamine receptors mediates gastric acid secretion. The activity of this receptor is mediated by G proteins which activate adenylyl cyclase. The sequence is that of Histamine H2 receptor (Hrh2) from Rattus norvegicus (Rat).